The chain runs to 107 residues: U1-lycotoxin-Ls1c (107 aa).

Residues 1 to 20 (MMKVLVVVALLVTLISYSSS) form the signal peptide. Residues 21–41 (EGIDDLEADELLSLMANEQTR) constitute a propeptide that is removed on maturation. 4 disulfides stabilise this stretch: Cys-44–Cys-59, Cys-51–Cys-68, Cys-58–Cys-86, and Cys-70–Cys-84.

The protein belongs to the neurotoxin 19 (CSTX) family. 04 (U1-Lctx) subfamily. Expressed by the venom gland.

The protein localises to the secreted. This chain is U1-lycotoxin-Ls1c, found in Lycosa singoriensis (Wolf spider).